Here is a 386-residue protein sequence, read N- to C-terminus: Centrosomal protein of 44 kDa (386 aa).

The binds with microtubules and centrioles stretch occupies residues 11-194 (RKLEQVLRSL…GVPEGTVTST (184 aa)). A coiled-coil region spans residues 232–262 (ELTALQIALAECQEKLKKLTWIEKRLECLEA). At serine 329 the chain carries Phosphoserine. Residues 359–382 (SEETTMQKMERMKKMFEETAELLK) are a coiled coil.

Interacts with CROCC. Interacts with POC1B; the interaction is direct and recruits POC1B to centriolar microtubules. Binds to centriolar microtubules.

The protein localises to the cytoplasm. The protein resides in the cytoskeleton. It localises to the microtubule organizing center. Its subcellular location is the centrosome. It is found in the centriole. The protein localises to the spindle pole. The protein resides in the midbody. Its function is as follows. Centriole-enriched microtubule-binding protein involved in centriole biogenesis. In collaboration with CEP295 and POC1B, is required for the centriole-to-centrosome conversion by ensuring the formation of bona fide centriole wall. Functions as a linker component that maintains centrosome cohesion. Associates with CROCC and regulates its stability and localization to the centrosome. This is Centrosomal protein of 44 kDa (Cep44) from Rattus norvegicus (Rat).